The chain runs to 155 residues: Ribosomal RNA large subunit methyltransferase H (155 aa).

Residues Leu-72, Gly-103, and 122-127 (LSDLTL) contribute to the S-adenosyl-L-methionine site.

The protein belongs to the RNA methyltransferase RlmH family. In terms of assembly, homodimer.

The protein localises to the cytoplasm. It catalyses the reaction pseudouridine(1915) in 23S rRNA + S-adenosyl-L-methionine = N(3)-methylpseudouridine(1915) in 23S rRNA + S-adenosyl-L-homocysteine + H(+). Specifically methylates the pseudouridine at position 1915 (m3Psi1915) in 23S rRNA. This Delftia acidovorans (strain DSM 14801 / SPH-1) protein is Ribosomal RNA large subunit methyltransferase H.